Reading from the N-terminus, the 236-residue chain is MQHNTNVDPQEIAKFERMAETWWDLNGEFKPLHLLNPLRLNYIDQTTGGIFGKKVLDVGCGGGILSESMARIGAEVDGLDMGEEPLEVARLHALETGVNITYVKNTAEAHSQDHQGYYDVVTCMEMLEHVPNPQSVIKACCDMVKPGGFVFFSTINRNLRSYVETILGAEYLLKMLPVGTHDHNKFIKPSELIELVDNTDLICKDAVGITYNPLTGIFKYTPRVDVNYMIATQKVD.

Arg-39, Gly-59, Asp-80, and Met-124 together coordinate S-adenosyl-L-methionine.

The protein belongs to the methyltransferase superfamily. UbiG/COQ3 family.

It carries out the reaction a 3-demethylubiquinol + S-adenosyl-L-methionine = a ubiquinol + S-adenosyl-L-homocysteine + H(+). The enzyme catalyses a 3-(all-trans-polyprenyl)benzene-1,2-diol + S-adenosyl-L-methionine = a 2-methoxy-6-(all-trans-polyprenyl)phenol + S-adenosyl-L-homocysteine + H(+). The protein operates within cofactor biosynthesis; ubiquinone biosynthesis. O-methyltransferase that catalyzes the 2 O-methylation steps in the ubiquinone biosynthetic pathway. In Shewanella sp. (strain W3-18-1), this protein is Ubiquinone biosynthesis O-methyltransferase.